A 385-amino-acid polypeptide reads, in one-letter code: Basigin (385 aa).

The N-terminal stretch at 1–21 (MAAALFVLLGFALLGTHGASG) is a signal peptide. Residues 37–120 (GGSVELHCEA…SNDPDRNHLT (84 aa)) form the Ig-like domain. Disulfide bonds link cysteine 44–cysteine 108, cysteine 157–cysteine 203, and cysteine 242–cysteine 301. The 82-residue stretch at 138–219 (EPGTVFTTVE…MGTANIQLHG (82 aa)) folds into the Ig-like C2-type domain. Residues 138–323 (EPGTVFTTVE…ITLRVRSHLA (186 aa)) are Extracellular-facing. N-linked (GlcNAc...) asparagine glycosylation occurs at asparagine 160. Residues 195–199 (DDQWG) form an essential for interaction with KDR/VEGFR2 region. The Ig-like V-type domain maps to 221–315 (PRVKAVKSSE…SKGSDQAIIT (95 aa)). N-linked (GlcNAc...) asparagine glycosylation is found at asparagine 268 and asparagine 302. The chain crosses the membrane as a helical span at residues 324–344 (ALWPFLGIVAEVLVLVTIIFI). The Cytoplasmic segment spans residues 345–385 (YEKRRKPEDVLDDDDAGSAPLKSSGQHQNDKGKNVRQRNSS). A disordered region spans residues 353 to 385 (DVLDDDDAGSAPLKSSGQHQNDKGKNVRQRNSS). Residues serine 362 and serine 368 each carry the phosphoserine modification.

As to quaternary structure, homooligomer. Interacts with NXNL1. Interacts with SLC2A1 and SLC16A1/GLUT1. Interacts with XKR8; promoting its localization at the cell membrane. (Microbial infection) Interacts with P.falciparum (isolate 3D7) RH5/PfRH5; the interaction is required for the invasion of the host erythrocytes by the parasite at the merozoite stage. In terms of assembly, homooligomer. Forms heterooligomers with isoform 3. Interacts with VEGFA and KDR/VEGFR2. Interacts with PPIA/CYPA. Interacts with PPIL2; regulates BSG transport to the cell membrane. Interacts with SLC16A1; interaction mediates SLC16A3 targeting to the plasma membrane. Interacts with SLC16A12. Interacts with SLC16A11. Interacts with AJAP1. Interacts with SLC1A3, ATP1B2, MAG and L1CAM. Interacts with SLC16A3; interaction mediates SLC16A3 targeting to the plasma membrane. As to quaternary structure, (Microbial infection) Interacts with P.falciparum (isolates 3D7 or 7G8) RH5/PfRH5; the interaction is required for the invasion of the host erythrocytes by the parasite at the merozoite stage. (Microbial infection) Does not interact with severe acute respiratory syndrome coronavirus 2 (SARS-CoV-2) spike glycoprotein, even if previous works were based on a putative interaction. In terms of assembly, forms heterooligomers with isoform 2. As to quaternary structure, interacts with SLC16A6; this interaction mediates targeting to the plasma membrane. In terms of processing, N-glycosylated. Retina-specific. Expressed in retinal cone photoreceptors (at protein level). As to expression, expressed in erythrocytes (at protein level). Highly expressed in melanoma cell lines (at protein level). Highly expressed in the heart, kidney, skeletal muscle and testis. In terms of tissue distribution, highly expressed in the bone marrow, fetal liver, lung, testis and thymus.

The protein resides in the melanosome. It localises to the cell membrane. The protein localises to the photoreceptor inner segment. It is found in the cell projection. Its subcellular location is the cilium. The protein resides in the photoreceptor outer segment. It localises to the endosome. The protein localises to the endoplasmic reticulum membrane. It is found in the basolateral cell membrane. In terms of biological role, essential for normal retinal maturation and development. Acts as a retinal cell surface receptor for NXNL1 and plays an important role in NXNL1-mediated survival of retinal cone photoreceptors. In association with glucose transporter SLC16A1/GLUT1 and NXNL1, promotes retinal cone survival by enhancing aerobic glycolysis and accelerating the entry of glucose into photoreceptors. May act as a potent stimulator of IL6 secretion in multiple cell lines that include monocytes. Its function is as follows. (Microbial infection) Erythrocyte receptor for P.falciparum RH5 which is essential for erythrocyte invasion by the merozoite stage of P.falciparum isolates 3D7 and Dd2. Signaling receptor for cyclophilins, essential for PPIA/CYPA and PPIB/CYPB-dependent signaling related to chemotaxis and adhesion of immune cells. Plays an important role in targeting monocarboxylate transporters SLC16A1/GLUT1, SLC16A11 and SLC16A12 to the plasma membrane. Acts as a coreceptor for vascular endothelial growth factor receptor 2 (KDR/VEGFR2) in endothelial cells enhancing its VEGFA-mediated activation and downstream signaling. Promotes angiogenesis through EPAS1/HIF2A-mediated up-regulation of VEGFA (isoform VEGF-165 and VEGF-121) and KDR/VEGFR2 in endothelial cells. Plays a key role in regulating tumor growth, invasion, metastasis and neoangiogenesis by stimulating the production and release of extracellular matrix metalloproteinases and KDR/VEGFR2 by both tumor cells and stromal cells (fibroblasts and endothelial cells). Functionally, (Microbial infection) Erythrocyte receptor for P.falciparum RH5 which is essential for erythrocyte invasion by the merozoite stage of P.falciparum isolates 3D7, Dd2, 7G8 and HB3. Binding of P.falciparum RH5 results in BSG dimerization which triggers an increase in intracellular Ca(2+) in the erythrocyte. This essential step leads to a rearrangement of the erythrocyte cytoskeleton required for the merozoite invasion. In terms of biological role, (Microbial infection) Can facilitate human SARS coronavirus (SARS-CoV-1) infection via its interaction with virus-associated PPIA/CYPA. Its function is as follows. (Microbial infection) Can facilitate HIV-1 infection via its interaction with virus-associated PPIA/CYPA. (Microbial infection) First described as a receptor for severe acute respiratory syndrome coronavirus 2 (SARS-CoV-2), it is not required for SARS-CoV-2 infection. Functionally, (Microbial infection) Acts as a receptor for measles virus. In terms of biological role, (Microbial infection) Promotes entry of pentamer-expressing human cytomegalovirus (HCMV) into epithelial and endothelial cells. The sequence is that of Basigin from Homo sapiens (Human).